A 148-amino-acid chain; its full sequence is UPF0756 membrane protein YeaL (148 aa).

4 helical membrane-spanning segments follow: residues 14–34 (ALGF…LIIV), 51–71 (LSIG…SGTL), 86–106 (LVAI…VTLM), and 121–141 (VLGV…AGLV).

This sequence belongs to the UPF0756 family.

The protein resides in the cell membrane. The chain is UPF0756 membrane protein YeaL from Shigella flexneri.